Here is a 373-residue protein sequence, read N- to C-terminus: Secondary metabolism regulator laeA (373 aa).

The interval 55–81 (ERDPAAGRWHANGSPSINSTSSKNPDR) is disordered. Over residues 67–77 (GSPSINSTSSK) the composition is skewed to polar residues.

It belongs to the methyltransferase superfamily. LaeA methyltransferase family. As to quaternary structure, component of the heterotrimeric velvet complex composed of laeA, veA and velB; VeA acting as a bridging protein between laeA and velB.

It localises to the nucleus. It catalyses the reaction L-methionyl-[protein] + S-adenosyl-L-methionine = S-methyl-L-methionyl-[protein] + S-adenosyl-L-homocysteine. In terms of biological role, methyltransferase that performs automethylation. No other methyl-accepting substrate has been identified yet. Component of the velvet transcription factor complex that acts as a global regulator for secondary metabolite gene expression. Positively controls expression of 20% to 40% of major classes of secondary metabolite biosynthesis genes such as nonribosomal peptide synthetases, polyketide synthases, and P450 monooxygenases. Controls the expression of the gliotoxin gene cluster. Controls the expression of the fumitremorgin, fumagillin, and pseurotin gene clusters, where genes for fumagillin and pseurotin are physically intertwined in a single supercluster. Regulates the biosynthetic genes required for endocrocin production. Secondary metabolites under the transcriptional regulation of laeA are necessary for inhibition of angiogenesis during invasive infection in mice. Controls the expression of cell surface rodA, a hydrophobin that acts as an antiphagocytic molecule. Also regulates the expression of genes involved in conidial biosynthesis. This is Secondary metabolism regulator laeA from Aspergillus fumigatus (strain ATCC MYA-4609 / CBS 101355 / FGSC A1100 / Af293) (Neosartorya fumigata).